The sequence spans 202 residues: Na(+)-translocating NADH-quinone reductase subunit E (202 aa).

The next 6 membrane-spanning stretches (helical) occupy residues 11 to 31, 35 to 55, 81 to 101, 114 to 134, 144 to 164, and 180 to 200; these read AVFI…FLAV, VTTS…SVPV, FLRF…LEMA, GIFL…SFMV, VVYG…LAGI, and LGIT…FSGI.

The protein belongs to the NqrDE/RnfAE family. As to quaternary structure, composed of six subunits; NqrA, NqrB, NqrC, NqrD, NqrE and NqrF.

The protein resides in the cell inner membrane. It carries out the reaction a ubiquinone + n Na(+)(in) + NADH + H(+) = a ubiquinol + n Na(+)(out) + NAD(+). In terms of biological role, NQR complex catalyzes the reduction of ubiquinone-1 to ubiquinol by two successive reactions, coupled with the transport of Na(+) ions from the cytoplasm to the periplasm. NqrA to NqrE are probably involved in the second step, the conversion of ubisemiquinone to ubiquinol. The protein is Na(+)-translocating NADH-quinone reductase subunit E of Pseudoalteromonas translucida (strain TAC 125).